We begin with the raw amino-acid sequence, 386 residues long: Chaperone protein DnaJ (386 aa).

Positions 4 to 68 (NFYDVLGVSR…QKRQQYDQLG (65 aa)) constitute a J domain. Basic and acidic residues-rich tracts occupy residues 22–35 (KAYR…HPDV) and 43–79 (ERFK…DKRG). Positions 22 to 132 (KAYRKQAAEH…GGNRPRQGQD (111 aa)) are disordered. Composition is skewed to gly residues over residues 80–104 (ATGG…GAGG) and 113–125 (FGGG…GGGN). Residues 147-229 (GATKEVTLTR…CGGDGVVREE (83 aa)) form a CR-type zinc finger. The Zn(2+) site is built by Cys-160, Cys-163, Cys-177, Cys-180, Cys-203, Cys-206, Cys-217, and Cys-220. 4 CXXCXGXG motif repeats span residues 160 to 167 (CDTCDGAG), 177 to 184 (CSQCNGRG), 203 to 210 (CPRCEGSG), and 217 to 224 (CADCGGDG).

This sequence belongs to the DnaJ family. As to quaternary structure, homodimer. It depends on Zn(2+) as a cofactor.

Its subcellular location is the cytoplasm. Participates actively in the response to hyperosmotic and heat shock by preventing the aggregation of stress-denatured proteins and by disaggregating proteins, also in an autonomous, DnaK-independent fashion. Unfolded proteins bind initially to DnaJ; upon interaction with the DnaJ-bound protein, DnaK hydrolyzes its bound ATP, resulting in the formation of a stable complex. GrpE releases ADP from DnaK; ATP binding to DnaK triggers the release of the substrate protein, thus completing the reaction cycle. Several rounds of ATP-dependent interactions between DnaJ, DnaK and GrpE are required for fully efficient folding. Also involved, together with DnaK and GrpE, in the DNA replication of plasmids through activation of initiation proteins. This is Chaperone protein DnaJ from Halorubrum lacusprofundi (strain ATCC 49239 / DSM 5036 / JCM 8891 / ACAM 34).